Reading from the N-terminus, the 189-residue chain is Dihydrofolate reductase (189 aa).

The region spanning 3–184 (SLNSIVAVCQ…IQYKFEVYQK (182 aa)) is the DHFR domain. NADP(+) is bound by residues A9 and 15-21 (GIGKDGN). Residue 30–35 (EYKYFQ) coordinates substrate. NADP(+) is bound at residue 54 to 56 (KKT). Substrate is bound by residues N64 and R70. NADP(+)-binding positions include 76-78 (SRE) and 116-123 (GGTAVYKA).

This sequence belongs to the dihydrofolate reductase family.

It catalyses the reaction (6S)-5,6,7,8-tetrahydrofolate + NADP(+) = 7,8-dihydrofolate + NADPH + H(+). Its pathway is cofactor biosynthesis; tetrahydrofolate biosynthesis; 5,6,7,8-tetrahydrofolate from 7,8-dihydrofolate: step 1/1. Functionally, key enzyme in folate metabolism. Contributes to the de novo mitochondrial thymidylate biosynthesis pathway. Catalyzes an essential reaction for de novo glycine and purine synthesis, and for DNA precursor synthesis. May bind to mRNA. This Gallus gallus (Chicken) protein is Dihydrofolate reductase (DHFR).